A 113-amino-acid polypeptide reads, in one-letter code: Large ribosomal subunit protein uL22 (113 aa).

The protein belongs to the universal ribosomal protein uL22 family. Part of the 50S ribosomal subunit.

Its function is as follows. This protein binds specifically to 23S rRNA; its binding is stimulated by other ribosomal proteins, e.g. L4, L17, and L20. It is important during the early stages of 50S assembly. It makes multiple contacts with different domains of the 23S rRNA in the assembled 50S subunit and ribosome. The globular domain of the protein is located near the polypeptide exit tunnel on the outside of the subunit, while an extended beta-hairpin is found that lines the wall of the exit tunnel in the center of the 70S ribosome. The polypeptide is Large ribosomal subunit protein uL22 (Symbiobacterium thermophilum (strain DSM 24528 / JCM 14929 / IAM 14863 / T)).